The chain runs to 215 residues: Glutathione S-transferase stcT (215 aa).

The GST N-terminal domain maps to 2–82 (PFGTLYTRPF…YDSNTTLLGT (81 aa)). Glutathione contacts are provided by Lys-52 and Glu-66. Residue Lys-52 participates in substrate binding. The GST C-terminal domain occupies 83 to 211 (TGQEYASIIR…PVLAEYEMPI (129 aa)).

The protein belongs to the GST superfamily. Glutathione is required as a cofactor.

It functions in the pathway mycotoxin biosynthesis; sterigmatocystin biosynthesis. Glutathione S-transferase; part of the gene cluster that mediates the biosynthesis of sterigmatocystin (ST), a polyketide-derived furanocoumarin which is part of the most toxic and carcinogenic compounds among the known mycotoxins. The first step in the biosynthesis of sterigmatocystin is the production of hexanoate by the fatty acid synthase (FAS) units stcJ and stcK. The polyketide backbone is assembled by the non-reducing polyketide synthase stcA by condensation of the starter hexanoyl-CoA and 7 malonyl-CoA extender units followed by cyclization and release of norsolorinic acid. Norsolorinic acid is the first stable intermediate in the biosynthesis of sterigmatocystin and is converted into averantin (AVN) by the ketoreductase stcE which reduces the hexanoate ketone to an alcohol. Averantin is then oxidized into 5'-hydroxyaverantin (HAVN) by the cytochrome P450 monooxygenase stcF. 5'-hydroxyaverantin is further converted to 5'-oxyaverantin (OAVN) by the 5'-hydroxyaverantin dehydrogenase stcG. The next step is the conversion of OAVN into averufin (AVF) which is catalyzed by a yet to be identified enzyme. The cytochrome P450 monooxygenase stcB and the flavin-binding monooxygenase stcW are both required for the conversion of averufin to 1-hydroxyversicolorone. The esterase stcI probably catalyzes the formation of versiconal hemiacetal acetate from 1-hydroxyversicolorone. The oxydoreductase stcN then probably catalyzes the biosynthetic step from versiconal to versicolorin B (VERB). The next step is performed by the versicolorin B desaturase stcL to produce versicolorin A (VERA). The ketoreductase stcU and the cytochrome P450 monooxygenase stcS are involved in the conversion of versicolorin A to demethylsterigmatocystin. The Baeyer-Villiger oxidas stcQ and the reductase stcR might be involved in the biosynthetic step from versicolorin A to demethylsterigmatocystin. The final step in the biosynthesis of sterigmatocystin is the methylation of demethylsterigmatocystin catalyzed by the methyltransferase stcP. The chain is Glutathione S-transferase stcT from Emericella nidulans (strain FGSC A4 / ATCC 38163 / CBS 112.46 / NRRL 194 / M139) (Aspergillus nidulans).